The sequence spans 318 residues: Ribose-phosphate pyrophosphokinase (318 aa).

ATP is bound by residues 46–48 (DGE) and 105–106 (RQ). Mg(2+) contacts are provided by H139 and D178. The active site involves K201. D-ribose 5-phosphate contacts are provided by residues R203, D227, and 231–235 (DTAGT).

The protein belongs to the ribose-phosphate pyrophosphokinase family. Class I subfamily. In terms of assembly, homohexamer. The cofactor is Mg(2+).

The protein localises to the cytoplasm. It catalyses the reaction D-ribose 5-phosphate + ATP = 5-phospho-alpha-D-ribose 1-diphosphate + AMP + H(+). It functions in the pathway metabolic intermediate biosynthesis; 5-phospho-alpha-D-ribose 1-diphosphate biosynthesis; 5-phospho-alpha-D-ribose 1-diphosphate from D-ribose 5-phosphate (route I): step 1/1. In terms of biological role, involved in the biosynthesis of the central metabolite phospho-alpha-D-ribosyl-1-pyrophosphate (PRPP) via the transfer of pyrophosphoryl group from ATP to 1-hydroxyl of ribose-5-phosphate (Rib-5-P). This is Ribose-phosphate pyrophosphokinase from Helicobacter pylori (strain ATCC 700392 / 26695) (Campylobacter pylori).